The primary structure comprises 304 residues: Homoserine O-succinyltransferase (304 aa).

Residue Cys-142 is the Acyl-thioester intermediate of the active site. Substrate-binding residues include Lys-163 and Ser-192. His-235 acts as the Proton acceptor in catalysis. Residue Glu-237 is part of the active site. Residue Arg-249 participates in substrate binding.

Belongs to the MetA family.

It is found in the cytoplasm. The enzyme catalyses L-homoserine + succinyl-CoA = O-succinyl-L-homoserine + CoA. Its pathway is amino-acid biosynthesis; L-methionine biosynthesis via de novo pathway; O-succinyl-L-homoserine from L-homoserine: step 1/1. Functionally, transfers a succinyl group from succinyl-CoA to L-homoserine, forming succinyl-L-homoserine. This Blochmanniella pennsylvanica (strain BPEN) protein is Homoserine O-succinyltransferase.